The following is a 377-amino-acid chain: Nitric oxide reductase FlRd-NAD(+) reductase (377 aa).

Belongs to the FAD-dependent oxidoreductase family. FAD is required as a cofactor.

Its subcellular location is the cytoplasm. It carries out the reaction 2 reduced [nitric oxide reductase rubredoxin domain] + NAD(+) + H(+) = 2 oxidized [nitric oxide reductase rubredoxin domain] + NADH. It participates in nitrogen metabolism; nitric oxide reduction. Functionally, one of at least two accessory proteins for anaerobic nitric oxide (NO) reductase. Reduces the rubredoxin moiety of NO reductase. This is Nitric oxide reductase FlRd-NAD(+) reductase from Escherichia coli O7:K1 (strain IAI39 / ExPEC).